A 712-amino-acid polypeptide reads, in one-letter code: Diacylglycerol kinase 2 (712 aa).

2 consecutive Phorbol-ester/DAG-type zinc fingers follow at residues 72-133 (HHQW…AKDC) and 145-208 (RHHW…GDAC). The 142-residue stretch at 338–479 (PDARPLLVFI…RWSVKIVEES (142 aa)) folds into the DAGKc domain.

It belongs to the eukaryotic diacylglycerol kinase family. As to quaternary structure, monomer. Expressed in rosette and cauline leaves, flowers, siliques and roots. Highly expressed in young leaves and at lower levels in older leaves. In young seedlings, expressed at the root-shoot junction zone and vascular bundles of the cotyledons. In older plants, expressed in root tip, central cylinder, root hair, leaf mesophyll cells and guard cells, sepals, filaments of the anthers, stigma, valves of young and early adult siliques and hilum of seeds.

The protein localises to the endoplasmic reticulum. It catalyses the reaction a 1,2-diacyl-sn-glycerol + ATP = a 1,2-diacyl-sn-glycero-3-phosphate + ADP + H(+). The catalysed reaction is 1-octadecanoyl-2-(5Z,8Z,11Z,14Z-eicosatetraenoyl)-sn-glycerol + ATP = 1-octadecanoyl-2-(5Z,8Z,11Z,14Z-eicosatetraenoyl)-sn-glycero-3-phosphate + ADP + H(+). It carries out the reaction 1,2-di-(9Z-octadecenoyl)-sn-glycerol + ATP = 1,2-di-(9Z-octadecenoyl)-sn-glycero-3-phosphate + ADP + H(+). Phosphorylates the second messenger diacylglycerol (DAG) to generate phosphatidic acid (PA), another important signaling molecule. PA is required for plant development and responses to abiotic stress and pathogen attack. May be involved in the accumulation of PA during cold stress. Involved in response to freezing stress by modulating the accumulation of PA. Exhibits high specificity for the unsaturated DAG analogs 1-stearoyl-2-arachidonoyl-sn-glycerol (1,2-SAG) and 1,2-dioleoyl-sn-glycerol (1,2-DOG). Exhibits high specificity for 1-palmitoyl, 2-oleoyl-sn-glycerol (1,2 POG), 1-stearoyl, 2-linoleoyl-sn-glycerol (1,2-SLG) and 1-oleoyl, 2-palmitoyl-sn-glycerol (1,2-OPG). Has almost no activity toward 1,2-dioctanoyl-sn-glycerol (1,2-DOCG), 1,2-dipalmitoyl-sn-glycerol (1,2-DPG), 1,2-dimyristoyl-sn-glycerol (1,2-DMG) and 1-oleoyl-2-acetyl-sn-glycerol (1,2-OAG). Functions together with DGK4 in male gametophyte development and biosynthesis of phosphatidylglycerol and phosphatidylinositol in the endoplasmic reticulum (ER). Involved in PA production for pollen grain growth, as well as leaf and root growth. The polypeptide is Diacylglycerol kinase 2 (Arabidopsis thaliana (Mouse-ear cress)).